Reading from the N-terminus, the 767-residue chain is MTIPTSISGFPRIGRDRELKKAIEAYWKGNATLDDVRETGRELRVRHWRLEKDAGIDLIPSNDFSLYDQMLDTAVLLNVIPARYRRLGFDNPEETLFAMARGYQGERGDVTALPMKKWFTTNYHYLVPEFDSSTEVRLNGTKPFDEYLEAKSLGIETKPVLIGPYTFLKLSRDAEAQELTIDEGLVDAVADVYAEVLRRFAKLGAQWVQLDEPYLVLDKHEGDVSLFKSLYSRLLPARDSGVRVLLNTYFGNIADIYETVKLFEFDGVGLDLIEGRDENLKAVEHHGVAARTTLFAGVVNGRNIWRNNYAESIALVEALQQVTANVAVASACSLLHVPFSTKGEEQLGDKVLRHFAFAVEKLEEVREIADLMQLDDDAKRQSTALAANQALFDGSRVVADEVVRARIAALADADYVRRPERGERQRLQREALGLPLLPTTTIGSFPQTKQVRAERARLRKGEISQGQYDEFIRRQIDDVVAKQEQIGLDVLVHGEFERNDMVEYFGQNLNGFLFTKNAWVQSYGTRCVKPPIIWGDVSRAQPITVAWSSYAQSRTAKPMKGMLTGPVTILNWSWPREDITHEEQTKQLALAIRDEVLDLEKAGIRIIQIDEAALREKLPLRESDWHREYLDWAIPAFRLVHSAVQPSTQIHTHMCYSEFNDIISDIDAMDADVISFEASRGDLVVLDAIHDAHFETEAGPGVYDIHSPRIPSVEETEERIGESLAKMDVNKVWINPDCGLKTRGNDETWPSLTHMVQAAKAMRANLD.

5-methyltetrahydropteroyltri-L-glutamate contacts are provided by residues 17–20 and K117; that span reads RELK. L-homocysteine-binding positions include 442–444 and E495; that span reads IGS. L-methionine contacts are provided by residues 442 to 444 and E495; that span reads IGS. Residues 526–527 and W572 contribute to the 5-methyltetrahydropteroyltri-L-glutamate site; that span reads RC. D610 lines the L-homocysteine pocket. An L-methionine-binding site is contributed by D610. E616 is a binding site for 5-methyltetrahydropteroyltri-L-glutamate. H653, C655, and E677 together coordinate Zn(2+). H706 serves as the catalytic Proton donor. Residue C738 participates in Zn(2+) binding.

This sequence belongs to the vitamin-B12 independent methionine synthase family. It depends on Zn(2+) as a cofactor.

It catalyses the reaction 5-methyltetrahydropteroyltri-L-glutamate + L-homocysteine = tetrahydropteroyltri-L-glutamate + L-methionine. It functions in the pathway amino-acid biosynthesis; L-methionine biosynthesis via de novo pathway; L-methionine from L-homocysteine (MetE route): step 1/1. Catalyzes the transfer of a methyl group from 5-methyltetrahydrofolate to homocysteine resulting in methionine formation. The polypeptide is 5-methyltetrahydropteroyltriglutamate--homocysteine methyltransferase (Bifidobacterium animalis subsp. lactis (strain AD011)).